The chain runs to 67 residues: Cell division protein ZapB (67 aa).

Residues 3–59 (LELLSKLETKIQTALETIELLKMELEEEKQKSIGLAEQNQQLSQDLNSWNEKVTGLV) adopt a coiled-coil conformation.

Belongs to the ZapB family. As to quaternary structure, homodimer. The ends of the coiled-coil dimer bind to each other, forming polymers. Interacts with FtsZ.

It localises to the cytoplasm. In terms of biological role, non-essential, abundant cell division factor that is required for proper Z-ring formation. It is recruited early to the divisome by direct interaction with FtsZ, stimulating Z-ring assembly and thereby promoting cell division earlier in the cell cycle. Its recruitment to the Z-ring requires functional FtsA or ZipA. This Shewanella woodyi (strain ATCC 51908 / MS32) protein is Cell division protein ZapB.